Consider the following 203-residue polypeptide: Peptidoglycan-recognition protein SA (203 aa).

A signal peptide spans 1–26 (MQPVRFGSPWIMAIGLVLLLLAFVSA). Disulfide bonds link cysteine 37–cysteine 160 and cysteine 74–cysteine 80. The N-acetylmuramoyl-L-alanine amidase domain maps to 59-186 (RPIRYVVIHH…SQVISTQSPG (128 aa)). Peptidoglycan binding stretches follow at residues 87 to 90 (MQAY) and 97 to 102 (FNDISY).

This sequence belongs to the N-acetylmuramoyl-L-alanine amidase 2 family. In larvae, it is expressed in fat body. Also expressed in uninduced hemocytes and mbn-2 cells.

The protein resides in the secreted. It catalyses the reaction N-acetyl-D-glucosaminyl-N-acetylmuramoyl-L-alanyl-meso-2,6-diaminoheptanedioyl-D-alanine + H2O = N-acetyl-D-glucosaminyl-N-acetylmuramoyl-L-alanyl-meso-2,6-diaminoheptanedioate + D-alanine. Peptidoglycan-recognition protein that plays a key role in innate immunity by binding to peptidoglycans (PGN) of Gram-positive bacteria and activating the Toll pathway upstream of spz activating enzyme SPE. Has no activity against Gram-negative bacteria and fungi. Shows some partial redundancy with PRPGP-SD in Gram-positive bacteria recognition. May act by forming a complex with GNBP1 that activates the proteolytic cleavage of Spatzle and the subsequent activation of Toll pathway. Binds to diaminopimelic acid-type tetrapeptide PGN (DAP-type PGN) and lysine-type PGN (Lys-type PGN). Has some L,D-carboxypeptidase activity for DAP-type PGN, which are specific to prokaryotes, but not for Lys-type PGN. This is Peptidoglycan-recognition protein SA (PGRP-SA) from Drosophila melanogaster (Fruit fly).